Consider the following 238-residue polypeptide: Phosphoribosylaminoimidazole-succinocarboxamide synthase (238 aa).

Belongs to the SAICAR synthetase family.

It catalyses the reaction 5-amino-1-(5-phospho-D-ribosyl)imidazole-4-carboxylate + L-aspartate + ATP = (2S)-2-[5-amino-1-(5-phospho-beta-D-ribosyl)imidazole-4-carboxamido]succinate + ADP + phosphate + 2 H(+). It participates in purine metabolism; IMP biosynthesis via de novo pathway; 5-amino-1-(5-phospho-D-ribosyl)imidazole-4-carboxamide from 5-amino-1-(5-phospho-D-ribosyl)imidazole-4-carboxylate: step 1/2. The sequence is that of Phosphoribosylaminoimidazole-succinocarboxamide synthase from Chlorobium phaeovibrioides (strain DSM 265 / 1930) (Prosthecochloris vibrioformis (strain DSM 265)).